Reading from the N-terminus, the 428-residue chain is Chaperone SurA (428 aa).

Residues 1 to 13 form the signal peptide; that stretch reads MLGALLLSGAVHA. PpiC domains lie at 164–265 and 276–375; these read SEEF…KLLE and RDEV…EVLG.

Its subcellular location is the periplasm. The catalysed reaction is [protein]-peptidylproline (omega=180) = [protein]-peptidylproline (omega=0). Its function is as follows. Chaperone involved in the correct folding and assembly of outer membrane proteins. Recognizes specific patterns of aromatic residues and the orientation of their side chains, which are found more frequently in integral outer membrane proteins. May act in both early periplasmic and late outer membrane-associated steps of protein maturation. In Pseudomonas savastanoi pv. phaseolicola (strain 1448A / Race 6) (Pseudomonas syringae pv. phaseolicola (strain 1448A / Race 6)), this protein is Chaperone SurA.